Consider the following 394-residue polypeptide: NAC domain-containing protein 3 (394 aa).

An NAC domain is found at 3–147; the sequence is TPVGLRFCPT…TYTLCKVMFN (145 aa). Residues 104 to 153 mediate DNA binding; it reads IGEKKILMFYTSKESKSDWVIHEYHGFSHNQMMMTYTLCKVMFNGGMREK. 2 disordered regions span residues 152 to 173 and 264 to 300; these read EKSS…RRDS and NSLT…CDSF. Residues 155 to 165 show a composition bias toward low complexity; sequence SSSPSSSGVSG. Residues 286–300 are compositionally biased toward polar residues; it reads PKTNSIQTSSTCDSF.

It is found in the nucleus. The polypeptide is NAC domain-containing protein 3 (NAC003) (Arabidopsis thaliana (Mouse-ear cress)).